A 610-amino-acid polypeptide reads, in one-letter code: Putative sensor histidine kinase NtrY-like (610 aa).

4 consecutive transmembrane segments (helical) span residues 18-38 (IGIL…TISI), 49-69 (KVIW…ILLT), 92-112 (IVVA…ISSA), and 292-312 (IIFI…GVIV). The HAMP domain maps to 314-368 (AKIVNPIKKLVIATDKVKSGDLTVQVPENEVDKDEIGTLYAAFNRMIKQLSRQQR). Positions 385–596 (KVAHEIKNPL…VIDIRFNLEE (212 aa)) constitute a Histidine kinase domain. H388 carries the post-translational modification Phosphohistidine; by autocatalysis.

The protein localises to the cell membrane. It carries out the reaction ATP + protein L-histidine = ADP + protein N-phospho-L-histidine.. In terms of biological role, member of the two-component regulatory system RBE_0470/RBE_0312. The sequence is that of Putative sensor histidine kinase NtrY-like from Rickettsia bellii (strain RML369-C).